Here is an 808-residue protein sequence, read N- to C-terminus: Probable E3 ubiquitin-protein ligase MARCHF10 (808 aa).

3 disordered regions span residues 33–81 (LRRQ…LTEP), 101–268 (QTSV…RKAS), and 284–415 (SRRE…EVGV). Positions 34 to 49 (RRQEYRRDPNEKKRDQ) are enriched in basic and acidic residues. Residues 237 to 249 (QAFQGKNSPQVLS) show a composition bias toward polar residues. Basic and acidic residues-rich tracts occupy residues 330 to 349 (KNFE…RSEP) and 379 to 397 (LPDR…ENAK). The RING-CH-type zinc-finger motif lies at 651 to 721 (DSEEEGDLCR…EMCKQGLLVD (71 aa)). Zn(2+) contacts are provided by C659, C662, C677, C679, H687, C690, C711, and C714. A disordered region spans residues 773 to 808 (ERERLSRNYPQPRTEENENSELGDGNEGSISQSQVV).

It carries out the reaction S-ubiquitinyl-[E2 ubiquitin-conjugating enzyme]-L-cysteine + [acceptor protein]-L-lysine = [E2 ubiquitin-conjugating enzyme]-L-cysteine + N(6)-ubiquitinyl-[acceptor protein]-L-lysine.. It participates in protein modification; protein ubiquitination. Functionally, E3 ubiquitin-protein ligase. E3 ubiquitin ligases accept ubiquitin from an E2 ubiquitin-conjugating enzyme in the form of a thioester and then directly transfer the ubiquitin to targeted substrates. The polypeptide is Probable E3 ubiquitin-protein ligase MARCHF10 (Homo sapiens (Human)).